Reading from the N-terminus, the 68-residue chain is Large ribosomal subunit protein bL31 (68 aa).

4 residues coordinate Zn(2+): Cys16, Cys18, Cys36, and Cys39.

It belongs to the bacterial ribosomal protein bL31 family. Type A subfamily. As to quaternary structure, part of the 50S ribosomal subunit. Zn(2+) is required as a cofactor.

Its function is as follows. Binds the 23S rRNA. This is Large ribosomal subunit protein bL31 from Sorangium cellulosum (strain So ce56) (Polyangium cellulosum (strain So ce56)).